Consider the following 155-residue polypeptide: Protein-export protein SecB (155 aa).

This sequence belongs to the SecB family. In terms of assembly, homotetramer, a dimer of dimers. One homotetramer interacts with 1 SecA dimer.

It localises to the cytoplasm. In terms of biological role, one of the proteins required for the normal export of preproteins out of the cell cytoplasm. It is a molecular chaperone that binds to a subset of precursor proteins, maintaining them in a translocation-competent state. It also specifically binds to its receptor SecA. This Escherichia fergusonii (strain ATCC 35469 / DSM 13698 / CCUG 18766 / IAM 14443 / JCM 21226 / LMG 7866 / NBRC 102419 / NCTC 12128 / CDC 0568-73) protein is Protein-export protein SecB.